The primary structure comprises 264 residues: Apolipoprotein A-I (264 aa).

Residues 1-18 (MKAVVLTVAVLFLTGSQA) form the signal peptide. A run of 2 repeats spans residues 67 to 88 (LKLL…EQLG) and 89 to 110 (PVTQ…QEMN). The 10 X approximate tandem repeats stretch occupies residues 67-264 (LKLLDNWDTL…DDAAKKLSSQ (198 aa)). Position 109 is a methionine sulfoxide (Met-109). The stretch at 111-121 (KDLEEVKQKVQ) is one 3; half-length repeat. Tandem repeats lie at residues 122–143 (PYLE…QKVE), 144–165 (PLST…EKLT), and 166–187 (PLGE…TQLA). One copy of the 7; truncated repeat lies at 188–207 (PYSDKMRERLAERLTALKDS). The residue at position 193 (Met-193) is a Methionine sulfoxide. Repeat unit 8 spans residues 208 to 229 (ASFAEYHAKASEHLKTLREKAK). The 9; half-length repeat unit spans residues 230 to 240 (PAIEDLGQGLL). Repeat 10 spans residues 241-264 (PVLENLKASFLSAIDDAAKKLSSQ).

Belongs to the apolipoprotein A1/A4/E family. Homodimer. Interacts with APOA1BP and CLU. Component of a sperm activating protein complex (SPAP), consisting of APOA1, an immunoglobulin heavy chain, an immunoglobulin light chain and albumin. Interacts with NDRG1. Interacts with SCGB3A2. Interacts with NAXE and YJEFN3. Glycosylated. Post-translationally, palmitoylated. In terms of processing, phosphorylation sites are present in the extracellular medium.

The protein localises to the secreted. Functionally, participates in the reverse transport of cholesterol from tissues to the liver for excretion by promoting cholesterol efflux from tissues and by acting as a cofactor for the lecithin cholesterol acyltransferase (LCAT). As part of the SPAP complex, activates spermatozoa motility. This is Apolipoprotein A-I (APOA1) from Castor canadensis (American beaver).